The primary structure comprises 259 residues: Flap endonuclease Xni (259 aa).

Asp-109 is a binding site for Mg(2+). In terms of domain architecture, 5'-3' exonuclease spans 165–255 (VKPQQLSDYW…FNLQDLRFTA (91 aa)). Positions 176, 187, and 190 each coordinate K(+). Residues 189 to 194 (GIGPKA) form an interaction with DNA region.

Belongs to the Xni family. Mg(2+) is required as a cofactor. K(+) serves as cofactor.

In terms of biological role, has flap endonuclease activity. During DNA replication, flap endonucleases cleave the 5'-overhanging flap structure that is generated by displacement synthesis when DNA polymerase encounters the 5'-end of a downstream Okazaki fragment. This Vibrio vulnificus (strain CMCP6) protein is Flap endonuclease Xni.